The primary structure comprises 694 residues: Elongation factor G (694 aa).

The 283-residue stretch at 6-288 folds into the tr-type G domain; it reads KLYRNIGIAA…GVIEYLPSPT (283 aa). GTP-binding positions include 15-22, 86-90, and 140-143; these read AHVDAGKT, DTPGH, and NKMD.

The protein belongs to the TRAFAC class translation factor GTPase superfamily. Classic translation factor GTPase family. EF-G/EF-2 subfamily.

It localises to the cytoplasm. Catalyzes the GTP-dependent ribosomal translocation step during translation elongation. During this step, the ribosome changes from the pre-translocational (PRE) to the post-translocational (POST) state as the newly formed A-site-bound peptidyl-tRNA and P-site-bound deacylated tRNA move to the P and E sites, respectively. Catalyzes the coordinated movement of the two tRNA molecules, the mRNA and conformational changes in the ribosome. This chain is Elongation factor G, found in Legionella pneumophila (strain Lens).